Reading from the N-terminus, the 194-residue chain is 7-methyl-GTP pyrophosphatase (194 aa).

Residue Asp69 is the Proton acceptor of the active site.

This sequence belongs to the Maf family. YceF subfamily. The cofactor is a divalent metal cation.

The protein localises to the cytoplasm. The catalysed reaction is N(7)-methyl-GTP + H2O = N(7)-methyl-GMP + diphosphate + H(+). Its function is as follows. Nucleoside triphosphate pyrophosphatase that hydrolyzes 7-methyl-GTP (m(7)GTP). May have a dual role in cell division arrest and in preventing the incorporation of modified nucleotides into cellular nucleic acids. This is 7-methyl-GTP pyrophosphatase (yceF) from Shigella flexneri.